The primary structure comprises 1347 residues: Probable serine/threonine-protein kinase DDB_G0288147 (1347 aa).

Residues 12–67 form a Phorbol-ester/DAG-type zinc finger; sequence NHRFEPYTLKHLTICKRCEKEIIGVSNSAQICYSCKNIYHTRCCKEIETKKLELIC. Disordered stretches follow at residues 262–316, 333–402, and 463–485; these read PFNE…LNES, SNNS…KSSK, and DNNNNNNNNNNNNNNNSNNNNNN. Residues 271-282 are compositionally biased toward polar residues; that stretch reads DSTLSASTYNRR. 3 stretches are compositionally biased toward low complexity: residues 286–316, 333–342, and 350–361; these read KNKNSNKNNTSSSSSAPASASSSKHSNLNES, SNNSNNLAAL, and TTTTTTTTTTTT. Composition is skewed to basic residues over residues 366 to 382 and 389 to 402; these read NNHHHHQHHHQNSKSRK and NKKKIKSPKNKSSK. A compositionally biased stretch (low complexity) spans 464-485; the sequence is NNNNNNNNNNNNNNNSNNNNNN. The Protein kinase domain maps to 599–854; it reads VKINVEIYDS…EILKVFYSLL (256 aa). Residues 605 to 613 and K626 each bind ATP; that span reads IYDSPLCTV. D724 functions as the Proton acceptor in the catalytic mechanism. 2 disordered regions span residues 937–1241 and 1282–1310; these read SERK…IVNP and SSDSSNSLSDPESEEYSMPIKRSSSIRSP. The span at 976–986 shows a compositional bias: acidic residues; sequence IIDDDDDDDDD. Low complexity-rich tracts occupy residues 1004 to 1015 and 1024 to 1062; these read NINSENKNNNNV and SSNSNNNNNNNNNNNNNNNNNNNNNNNNNNSNNNNNNNN. Composition is skewed to polar residues over residues 1063-1083 and 1118-1127; these read LRQNQFLGNDLNKSQDNNQLM and LSSSQTSEIG. Low complexity-rich tracts occupy residues 1128–1241 and 1282–1291; these read DNNT…IVNP and SSDSSNSLSD.

Belongs to the protein kinase superfamily. TKL Ser/Thr protein kinase family.

The catalysed reaction is L-seryl-[protein] + ATP = O-phospho-L-seryl-[protein] + ADP + H(+). The enzyme catalyses L-threonyl-[protein] + ATP = O-phospho-L-threonyl-[protein] + ADP + H(+). The chain is Probable serine/threonine-protein kinase DDB_G0288147 from Dictyostelium discoideum (Social amoeba).